Reading from the N-terminus, the 160-residue chain is Serine-protein kinase RsbW (160 aa).

Belongs to the anti-sigma-factor family.

The catalysed reaction is L-seryl-[protein] + ATP = O-phospho-L-seryl-[protein] + ADP + H(+). It catalyses the reaction L-threonyl-[protein] + ATP = O-phospho-L-threonyl-[protein] + ADP + H(+). Negative regulator of sigma-B activity. Phosphorylates and inactivates its specific antagonist protein, RsbV. Upon phosphorylation of RsbV, RsbW is released and binds to sigma-B, thereby blocking its ability to form an RNA polymerase holoenzyme (E-sigma-B). This Bacillus licheniformis protein is Serine-protein kinase RsbW.